A 249-amino-acid chain; its full sequence is Tetrahydromethanopterin S-methyltransferase subunit A (249 aa).

The Cytoplasmic segment spans residues 2–225; that stretch reads PEKAEPAEGW…YMAGYLSGRT (224 aa). Position 88 (His-88) interacts with 5-hydroxybenzimidazolylcob(I)amide. The helical transmembrane segment at 226-246 threads the bilayer; sequence MGLLIGIISGMIFLFLPMVVL. Over 247-249 the chain is Extracellular; sequence GGV.

It belongs to the MtrA family. The complex is composed of 8 subunits; MtrA, MtrB, MtrC, MtrD, MtrE, MtrF, MtrG and MtrH. 5-hydroxybenzimidazolylcob(I)amide serves as cofactor.

Its subcellular location is the cell membrane. It carries out the reaction 5-methyl-5,6,7,8-tetrahydromethanopterin + coenzyme M + 2 Na(+)(in) = 5,6,7,8-tetrahydromethanopterin + methyl-coenzyme M + 2 Na(+)(out). The protein operates within one-carbon metabolism; methanogenesis from CO(2); methyl-coenzyme M from 5,10-methylene-5,6,7,8-tetrahydromethanopterin: step 2/2. Its function is as follows. Part of a complex that catalyzes the formation of methyl-coenzyme M and tetrahydromethanopterin from coenzyme M and methyl-tetrahydromethanopterin. This is an energy-conserving, sodium-ion translocating step. In Methanopyrus kandleri (strain AV19 / DSM 6324 / JCM 9639 / NBRC 100938), this protein is Tetrahydromethanopterin S-methyltransferase subunit A.